Reading from the N-terminus, the 106-residue chain is Hydrogenase expression/formation protein HoxL (106 aa).

It belongs to the HupF/HypC family.

The polypeptide is Hydrogenase expression/formation protein HoxL (hoxL) (Azotobacter vinelandii).